The following is a 608-amino-acid chain: Glutamine--fructose-6-phosphate aminotransferase [isomerizing] (608 aa).

The Nucleophile; for GATase activity role is filled by Cys-2. The Glutamine amidotransferase type-2 domain maps to 2–217; that stretch reads CGIVGIVGHK…DGDWAVVGKT (216 aa). SIS domains follow at residues 283-422 and 456-598; these read TDID…ARGT and LSRE…VDQP. Lys-603 functions as the For Fru-6P isomerization activity in the catalytic mechanism.

It localises to the cytoplasm. It carries out the reaction D-fructose 6-phosphate + L-glutamine = D-glucosamine 6-phosphate + L-glutamate. In terms of biological role, involved in the production of the root hair deformation (HAD) factor specifically on medicago. The protein is Glutamine--fructose-6-phosphate aminotransferase [isomerizing] (nodM) of Rhizobium leguminosarum bv. viciae.